A 529-amino-acid polypeptide reads, in one-letter code: Bifunctional purine biosynthesis protein PurH (529 aa).

The region spanning 1 to 148 (MQQRRPIRRA…KNHKDVAIVV (148 aa)) is the MGS-like domain.

This sequence belongs to the PurH family.

The catalysed reaction is (6R)-10-formyltetrahydrofolate + 5-amino-1-(5-phospho-beta-D-ribosyl)imidazole-4-carboxamide = 5-formamido-1-(5-phospho-D-ribosyl)imidazole-4-carboxamide + (6S)-5,6,7,8-tetrahydrofolate. The enzyme catalyses IMP + H2O = 5-formamido-1-(5-phospho-D-ribosyl)imidazole-4-carboxamide. The protein operates within purine metabolism; IMP biosynthesis via de novo pathway; 5-formamido-1-(5-phospho-D-ribosyl)imidazole-4-carboxamide from 5-amino-1-(5-phospho-D-ribosyl)imidazole-4-carboxamide (10-formyl THF route): step 1/1. It functions in the pathway purine metabolism; IMP biosynthesis via de novo pathway; IMP from 5-formamido-1-(5-phospho-D-ribosyl)imidazole-4-carboxamide: step 1/1. This chain is Bifunctional purine biosynthesis protein PurH, found in Yersinia pseudotuberculosis serotype IB (strain PB1/+).